The chain runs to 156 residues: Small ribosomal subunit protein uS7 (156 aa).

This sequence belongs to the universal ribosomal protein uS7 family. Part of the 30S ribosomal subunit. Contacts proteins S9 and S11.

One of the primary rRNA binding proteins, it binds directly to 16S rRNA where it nucleates assembly of the head domain of the 30S subunit. Is located at the subunit interface close to the decoding center, probably blocks exit of the E-site tRNA. This is Small ribosomal subunit protein uS7 from Bradyrhizobium sp. (strain BTAi1 / ATCC BAA-1182).